Reading from the N-terminus, the 314-residue chain is Pantothenate kinase (314 aa).

93-100 (GSVAVGKS) provides a ligand contact to ATP.

It belongs to the prokaryotic pantothenate kinase family.

The protein resides in the cytoplasm. It catalyses the reaction (R)-pantothenate + ATP = (R)-4'-phosphopantothenate + ADP + H(+). It functions in the pathway cofactor biosynthesis; coenzyme A biosynthesis; CoA from (R)-pantothenate: step 1/5. The sequence is that of Pantothenate kinase from Shewanella denitrificans (strain OS217 / ATCC BAA-1090 / DSM 15013).